Consider the following 198-residue polypeptide: Probable thymidylate kinase (198 aa).

Residue 9-16 participates in ATP binding; the sequence is GIDGSGKT.

This sequence belongs to the thymidylate kinase family.

It catalyses the reaction dTMP + ATP = dTDP + ADP. This chain is Probable thymidylate kinase, found in Methanococcus vannielii (strain ATCC 35089 / DSM 1224 / JCM 13029 / OCM 148 / SB).